A 469-amino-acid chain; its full sequence is MNSVSPLATQYGSPKGSQQMENRSTQSGGHEQRKMGHQDATLDGEADEVDKLKSKLLSAWNNVKYGWSVKMKTTFSRSAPVYLLGERYFFRLDDEIERFQKDFVSRVWLTYRRDFPALEGTALTTDCGWGCMIRSGQMLLAQGLLLHLLSREWTWSEALYRHFVEMEPIRSSSPPSMPLSSLATGHSAGDYQPHTQCSGAPHGDQVHRNIMRWFSDHPGSPFGLHQLVTLGSIFGKKAGDWYGPSIVAHIIKKAIETSSEVPELSVYVSQDCTVYKADIEQLFAGDVPHAETSRGAGKAVIILVPVRLGGETFNPVYKHCLKEFLRMPSCLGIIGGKPKHSLYFIGYQDNYLLYLDPHYCQPYIDTSKNDFPLESFHCNSPRKISITRMDPSCTFAFYAKNSEDFGKLCDHLMKVLHSPRAEEKYPIFSISEGQAQEYAEGPQSSSHPPVCRKKGPLVKRPSSDEFEFL.

Positions 1–29 (MNSVSPLATQYGSPKGSQQMENRSTQSGG) are enriched in polar residues. The tract at residues 1–41 (MNSVSPLATQYGSPKGSQQMENRSTQSGGHEQRKMGHQDAT) is disordered. C131 acts as the Nucleophile in catalysis. The disordered stretch occupies residues 169–191 (IRSSSPPSMPLSSLATGHSAGDY). A compositionally biased stretch (low complexity) spans 171–182 (SSSPPSMPLSSL). Catalysis depends on residues D356 and H358. The interval 436–469 (QEYAEGPQSSSHPPVCRKKGPLVKRPSSDEFEFL) is disordered.

Belongs to the peptidase C54 family.

It is found in the cytoplasm. It catalyses the reaction [protein]-C-terminal L-amino acid-glycyl-phosphatidylethanolamide + H2O = [protein]-C-terminal L-amino acid-glycine + a 1,2-diacyl-sn-glycero-3-phosphoethanolamine. The enzyme catalyses [protein]-C-terminal L-amino acid-glycyl-phosphatidylserine + H2O = [protein]-C-terminal L-amino acid-glycine + a 1,2-diacyl-sn-glycero-3-phospho-L-serine. Cysteine protease that plays a key role in autophagy by mediating both proteolytic activation and delipidation of ATG8 family proteins. The protease activity is required for proteolytic activation of ATG8 family proteins to reveal a C-terminal glycine. Exposure of the glycine at the C-terminus is essential for ATG8 proteins conjugation to phosphatidylethanolamine (PE) and insertion to membranes, which is necessary for autophagy. In addition to the protease activity, also mediates delipidation of ATG8 family proteins. Catalyzes delipidation of PE-conjugated forms of ATG8 proteins during macroautophagy. Also involved in non-canonical autophagy, a parallel pathway involving conjugation of ATG8 proteins to single membranes at endolysosomal compartments, by catalyzing delipidation of ATG8 proteins conjugated to phosphatidylserine (PS). The polypeptide is Cysteine protease ATG4D (Xenopus laevis (African clawed frog)).